The chain runs to 351 residues: Porphobilinogen deaminase (351 aa).

Cys242 carries the post-translational modification S-(dipyrrolylmethanemethyl)cysteine.

Belongs to the HMBS family. As to quaternary structure, monomer. The cofactor is dipyrromethane.

It catalyses the reaction 4 porphobilinogen + H2O = hydroxymethylbilane + 4 NH4(+). It functions in the pathway porphyrin-containing compound metabolism; protoporphyrin-IX biosynthesis; coproporphyrinogen-III from 5-aminolevulinate: step 2/4. Its function is as follows. Tetrapolymerization of the monopyrrole PBG into the hydroxymethylbilane pre-uroporphyrinogen in several discrete steps. The sequence is that of Porphobilinogen deaminase from Rickettsia africae (strain ESF-5).